A 201-amino-acid polypeptide reads, in one-letter code: ATP-dependent Clp protease proteolytic subunit (201 aa).

The active-site Nucleophile is Ser98. The active site involves His123.

The protein belongs to the peptidase S14 family. As to quaternary structure, fourteen ClpP subunits assemble into 2 heptameric rings which stack back to back to give a disk-like structure with a central cavity, resembling the structure of eukaryotic proteasomes.

Its subcellular location is the cytoplasm. The enzyme catalyses Hydrolysis of proteins to small peptides in the presence of ATP and magnesium. alpha-casein is the usual test substrate. In the absence of ATP, only oligopeptides shorter than five residues are hydrolyzed (such as succinyl-Leu-Tyr-|-NHMec, and Leu-Tyr-Leu-|-Tyr-Trp, in which cleavage of the -Tyr-|-Leu- and -Tyr-|-Trp bonds also occurs).. In terms of biological role, cleaves peptides in various proteins in a process that requires ATP hydrolysis. Has a chymotrypsin-like activity. Plays a major role in the degradation of misfolded proteins. The sequence is that of ATP-dependent Clp protease proteolytic subunit from Rickettsia felis (strain ATCC VR-1525 / URRWXCal2) (Rickettsia azadi).